The chain runs to 192 residues: Adenylate kinase (192 aa).

11-16 contributes to the ATP binding site; it reads GSGKGT. Residues 31–60 form an NMP region; that stretch reads STGDIFRANVKGETPLGIEAKKYMDNGDFV. Residues Thr32, Arg37, 58 to 60, 86 to 89, and Gln93 each bind AMP; these read DFV and GYPR. An LID region spans residues 127-137; it reads GRAKETGRSDD. ATP is bound at residue Arg128. Arg134 and Arg145 together coordinate AMP. Gly173 is an ATP binding site.

It belongs to the adenylate kinase family. As to quaternary structure, monomer.

The protein localises to the cytoplasm. The enzyme catalyses AMP + ATP = 2 ADP. Its pathway is purine metabolism; AMP biosynthesis via salvage pathway; AMP from ADP: step 1/1. Functionally, catalyzes the reversible transfer of the terminal phosphate group between ATP and AMP. Plays an important role in cellular energy homeostasis and in adenine nucleotide metabolism. The protein is Adenylate kinase of Pseudarthrobacter chlorophenolicus (strain ATCC 700700 / DSM 12829 / CIP 107037 / JCM 12360 / KCTC 9906 / NCIMB 13794 / A6) (Arthrobacter chlorophenolicus).